Reading from the N-terminus, the 646-residue chain is Acetyl-coenzyme A synthetase (646 aa).

CoA is bound by residues 189–192 (RGPK), threonine 307, and asparagine 331. Residues 383-385 (GEP), 407-412 (DTWWQT), aspartate 496, and arginine 511 each bind ATP. Serine 519 provides a ligand contact to CoA. Arginine 522 serves as a coordination point for ATP. Mg(2+) contacts are provided by valine 533, histidine 535, and valine 538. Residue arginine 580 coordinates CoA. An N6-acetyllysine modification is found at lysine 605.

The protein belongs to the ATP-dependent AMP-binding enzyme family. Requires Mg(2+) as cofactor. Acetylated. Deacetylation by the SIR2-homolog deacetylase activates the enzyme.

It catalyses the reaction acetate + ATP + CoA = acetyl-CoA + AMP + diphosphate. Catalyzes the conversion of acetate into acetyl-CoA (AcCoA), an essential intermediate at the junction of anabolic and catabolic pathways. AcsA undergoes a two-step reaction. In the first half reaction, AcsA combines acetate with ATP to form acetyl-adenylate (AcAMP) intermediate. In the second half reaction, it can then transfer the acetyl group from AcAMP to the sulfhydryl group of CoA, forming the product AcCoA. This chain is Acetyl-coenzyme A synthetase, found in Desulfatibacillum aliphaticivorans.